Consider the following 238-residue polypeptide: Probable transcriptional regulatory protein SSU05_0402 (238 aa).

This sequence belongs to the TACO1 family. YeeN subfamily.

It localises to the cytoplasm. This is Probable transcriptional regulatory protein SSU05_0402 from Streptococcus suis (strain 05ZYH33).